The chain runs to 468 residues: UDP-N-acetylmuramoylalanine--D-glutamate ligase (468 aa).

G127–T133 contacts ATP.

This sequence belongs to the MurCDEF family.

The protein localises to the cytoplasm. The enzyme catalyses UDP-N-acetyl-alpha-D-muramoyl-L-alanine + D-glutamate + ATP = UDP-N-acetyl-alpha-D-muramoyl-L-alanyl-D-glutamate + ADP + phosphate + H(+). It functions in the pathway cell wall biogenesis; peptidoglycan biosynthesis. Its function is as follows. Cell wall formation. Catalyzes the addition of glutamate to the nucleotide precursor UDP-N-acetylmuramoyl-L-alanine (UMA). In Prochlorococcus marinus (strain MIT 9312), this protein is UDP-N-acetylmuramoylalanine--D-glutamate ligase.